A 354-amino-acid chain; its full sequence is Aspartate carbamoyltransferase catalytic subunit (354 aa).

2 residues coordinate carbamoyl phosphate: Arg-67 and Thr-68. Residue Lys-95 participates in L-aspartate binding. Carbamoyl phosphate contacts are provided by Arg-117, His-150, and Gln-153. 2 residues coordinate L-aspartate: Arg-190 and Arg-261. Residues Gly-302 and Pro-303 each coordinate carbamoyl phosphate.

This sequence belongs to the aspartate/ornithine carbamoyltransferase superfamily. ATCase family. In terms of assembly, heterododecamer (2C3:3R2) of six catalytic PyrB chains organized as two trimers (C3), and six regulatory PyrI chains organized as three dimers (R2).

The enzyme catalyses carbamoyl phosphate + L-aspartate = N-carbamoyl-L-aspartate + phosphate + H(+). It functions in the pathway pyrimidine metabolism; UMP biosynthesis via de novo pathway; (S)-dihydroorotate from bicarbonate: step 2/3. In terms of biological role, catalyzes the condensation of carbamoyl phosphate and aspartate to form carbamoyl aspartate and inorganic phosphate, the committed step in the de novo pyrimidine nucleotide biosynthesis pathway. The polypeptide is Aspartate carbamoyltransferase catalytic subunit (Synechococcus sp. (strain RCC307)).